The primary structure comprises 84 residues: Large ribosomal subunit protein bL27 (84 aa).

The segment at 1–22 is disordered; sequence MAHKKGASSTRNGRDSNAQRLG. A compositionally biased stretch (polar residues) spans 7 to 19; it reads ASSTRNGRDSNAQ.

It belongs to the bacterial ribosomal protein bL27 family.

This is Large ribosomal subunit protein bL27 from Streptomyces coelicolor (strain ATCC BAA-471 / A3(2) / M145).